We begin with the raw amino-acid sequence, 435 residues long: Adenylosuccinate synthetase (435 aa).

GTP-binding positions include 17–23 and 47–49; these read GDEGKGK and GHT. Catalysis depends on Asp18, which acts as the Proton acceptor. Mg(2+) is bound by residues Asp18 and Gly47. Residues 18–21, 45–48, Thr138, Arg152, Asn232, Thr247, and Arg311 contribute to the IMP site; these read DEGK and NAGH. His48 acts as the Proton donor in catalysis. Residue 307–313 participates in substrate binding; sequence VTTGRKR. Residues Arg313, 339–341, and 421–423 each bind GTP; these read KLD and GVG.

The protein belongs to the adenylosuccinate synthetase family. As to quaternary structure, homodimer. Mg(2+) is required as a cofactor.

It is found in the cytoplasm. The enzyme catalyses IMP + L-aspartate + GTP = N(6)-(1,2-dicarboxyethyl)-AMP + GDP + phosphate + 2 H(+). Its pathway is purine metabolism; AMP biosynthesis via de novo pathway; AMP from IMP: step 1/2. Plays an important role in the de novo pathway and in the salvage pathway of purine nucleotide biosynthesis. Catalyzes the first committed step in the biosynthesis of AMP from IMP. The polypeptide is Adenylosuccinate synthetase (Caenorhabditis briggsae).